The following is a 1475-amino-acid chain: ABC transporter G family member 15 (1475 aa).

The span at M1–G10 shows a compositional bias: basic and acidic residues. Disordered regions lie at residues M1–I40 and N75–A94. Residues N17 to N34 show a composition bias toward low complexity. Positions N25–E67 form a coiled coil. The 250-residue stretch at L155–P404 folds into the ABC transporter 1 domain. The ABC transmembrane type-2 1 domain maps to W507 to S753. 5 helical membrane passes run I596 to L616, F623 to Y641, I653 to I673, V680 to M699, and I770 to I790. An ABC transporter 2 domain is found at F842 to V1087. ATP is bound at residue G879–T886. The next 6 membrane-spanning stretches (helical) occupy residues G1180–F1200, F1216–I1236, F1256–F1276, F1293–I1313, A1323–I1343, and F1449–L1469. The ABC transmembrane type-2 2 domain occupies G1180–L1404.

This sequence belongs to the ABC transporter superfamily. ABCG family. PDR (TC 3.A.1.205) subfamily.

The protein localises to the membrane. The polypeptide is ABC transporter G family member 15 (abcG15) (Dictyostelium discoideum (Social amoeba)).